The primary structure comprises 456 residues: PTS system sucrose-specific EIIBC component (456 aa).

One can recognise a PTS EIIB type-1 domain in the interval 4-87 (EQISRSLLPL…IQAAGISESS (84 aa)). The active-site Phosphocysteine intermediate; for EIIB activity is Cys-26. Positions 107–456 (RLLSNIFVPI…LTLKYKTDAE (350 aa)) constitute a PTS EIIC type-1 domain. 10 helical membrane-spanning segments follow: residues 112 to 132 (IFVP…LLGM), 144 to 164 (ALYI…PILI), 181 to 201 (TLGG…AAGF), 209 to 229 (IEVA…AVWF), 247 to 267 (LILT…LLIG), 288 to 308 (AGWL…ITGI), 329 to 349 (FLLP…FAVW), 360 to 380 (ITLP…IFGI), 388 to 408 (FIAA…MHVY), and 428 to 448 (LLNY…LSLT).

The protein resides in the cell inner membrane. The catalysed reaction is N(pros)-phospho-L-histidyl-[protein](out) + sucrose = sucrose 6(G)-phosphate(in) + L-histidyl-[protein]. Functionally, the phosphoenolpyruvate-dependent sugar phosphotransferase system (sugar PTS), a major carbohydrate active transport system, catalyzes the phosphorylation of incoming sugar substrates concomitantly with their translocation across the cell membrane. This system is involved in sucrose transport. This is PTS system sucrose-specific EIIBC component from Klebsiella pneumoniae.